The following is a 198-amino-acid chain: tRNA (pseudouridine(54)-N(1))-methyltransferase (198 aa).

An S-adenosyl-L-methionine-binding site is contributed by Leu128.

Belongs to the methyltransferase superfamily. TrmY family. Homodimer.

It localises to the cytoplasm. The enzyme catalyses pseudouridine(54) in tRNA + S-adenosyl-L-methionine = N(1)-methylpseudouridine(54) in tRNA + S-adenosyl-L-homocysteine + H(+). Functionally, specifically catalyzes the N1-methylation of pseudouridine at position 54 (Psi54) in tRNAs. This is tRNA (pseudouridine(54)-N(1))-methyltransferase from Haloarcula marismortui (strain ATCC 43049 / DSM 3752 / JCM 8966 / VKM B-1809) (Halobacterium marismortui).